A 132-amino-acid chain; its full sequence is Small ribosomal subunit protein uS8 (132 aa).

The protein belongs to the universal ribosomal protein uS8 family. Part of the 30S ribosomal subunit. Contacts proteins S5 and S12.

Its function is as follows. One of the primary rRNA binding proteins, it binds directly to 16S rRNA central domain where it helps coordinate assembly of the platform of the 30S subunit. The protein is Small ribosomal subunit protein uS8 of Enterococcus faecalis (strain ATCC 700802 / V583).